The primary structure comprises 569 residues: Glucose-6-phosphate isomerase, cytosolic 1A (569 aa).

Glu-360 (proton donor) is an active-site residue. Catalysis depends on residues His-391 and Lys-516.

It belongs to the GPI family. In terms of assembly, homodimer.

The protein localises to the cytoplasm. The catalysed reaction is alpha-D-glucose 6-phosphate = beta-D-fructose 6-phosphate. The protein operates within carbohydrate degradation; glycolysis; D-glyceraldehyde 3-phosphate and glycerone phosphate from D-glucose: step 2/4. In Clarkia lewisii (Farewell-to-spring), this protein is Glucose-6-phosphate isomerase, cytosolic 1A (PGIC1-A).